The chain runs to 168 residues: Endoribonuclease YbeY (168 aa).

Positions 123, 127, and 133 each coordinate Zn(2+).

This sequence belongs to the endoribonuclease YbeY family. Zn(2+) is required as a cofactor.

It localises to the cytoplasm. Its function is as follows. Single strand-specific metallo-endoribonuclease involved in late-stage 70S ribosome quality control and in maturation of the 3' terminus of the 16S rRNA. This is Endoribonuclease YbeY from Francisella tularensis subsp. tularensis (strain SCHU S4 / Schu 4).